A 1318-amino-acid chain; its full sequence is Putative tetratricopeptide repeat protein 41 (1318 aa).

TPR repeat units follow at residues Thr399–Ile432, Trp653–Glu684, Cys817–Ser850, Leu858–Leu891, Met991–Ala1027, and Ser1045–His1082.

The protein resides in the cytoplasm. This is Putative tetratricopeptide repeat protein 41 from Homo sapiens (Human).